Reading from the N-terminus, the 101-residue chain is Thyrotropin subunit beta (101 aa).

4 disulfides stabilise this stretch: cysteine 2/cysteine 88, cysteine 10/cysteine 66, cysteine 14/cysteine 68, and cysteine 71/cysteine 78. Residue asparagine 6 is glycosylated (N-linked (GlcNAc...) asparagine).

The protein belongs to the glycoprotein hormones subunit beta family. Heterodimer of a common alpha chain and a unique beta chain which confers biological specificity to thyrotropin, lutropin, follitropin and gonadotropin.

The protein localises to the secreted. Its function is as follows. Indispensable for the control of thyroid structure and metabolism. The polypeptide is Thyrotropin subunit beta (TSHB) (Phodopus sungorus (Striped hairy-footed hamster)).